A 392-amino-acid polypeptide reads, in one-letter code: Methylthioribose-1-phosphate isomerase (392 aa).

The active-site Proton donor is Asp-268.

The protein belongs to the eIF-2B alpha/beta/delta subunits family. MtnA subfamily.

The protein resides in the cytoplasm. It localises to the nucleus. It catalyses the reaction 5-(methylsulfanyl)-alpha-D-ribose 1-phosphate = 5-(methylsulfanyl)-D-ribulose 1-phosphate. It functions in the pathway amino-acid biosynthesis; L-methionine biosynthesis via salvage pathway; L-methionine from S-methyl-5-thio-alpha-D-ribose 1-phosphate: step 1/6. In terms of biological role, catalyzes the interconversion of methylthioribose-1-phosphate (MTR-1-P) into methylthioribulose-1-phosphate (MTRu-1-P). This Ajellomyces capsulatus (strain G186AR / H82 / ATCC MYA-2454 / RMSCC 2432) (Darling's disease fungus) protein is Methylthioribose-1-phosphate isomerase.